Here is a 266-residue protein sequence, read N- to C-terminus: Transcription factor atoh8 (266 aa).

Residues 140–164 (AASQAPAGGSERAESPRKRAGEPSG) form a disordered region. Basic and acidic residues predominate over residues 150–160 (ERAESPRKRAG). The tract at residues 175–188 (TRRLLANARERTRV) is basic motif; degenerate. One can recognise a bHLH domain in the interval 175–227 (TRRLLANARERTRVHTISAAFEALRKQVPCYSYGQKLSKLAILRIACNYILSL). The helix-loop-helix motif stretch occupies residues 189–227 (HTISAAFEALRKQVPCYSYGQKLSKLAILRIACNYILSL).

Its subcellular location is the nucleus. The protein resides in the nucleus speckle. The protein localises to the cytoplasm. Its function is as follows. Transcription factor that binds a palindromic (canonical) core consensus DNA sequence 5'-CANNTG- 3' known as an E-box element, possibly as a heterodimer with other bHLH proteins. During development, is required for heart looping and swim bladder formation by acting in concert with GATA4 and ZFPM1. During the development of both the retina and skeletal muscles is required for neural retinal cell through modulating PAX6 and NEUROG3 expression and myogenic differentiation. This Danio rerio (Zebrafish) protein is Transcription factor atoh8.